Reading from the N-terminus, the 176-residue chain is Flavodoxin (176 aa).

One can recognise a Flavodoxin-like domain in the interval 4–172 (IGIFFGTDTG…RLASWLEEIK (169 aa)).

This sequence belongs to the flavodoxin family. FMN serves as cofactor.

Functionally, low-potential electron donor to a number of redox enzymes. NifF is the electron donor to nitrogenase. The chain is Flavodoxin (nifF) from Klebsiella pneumoniae.